The following is a 40-amino-acid chain: MLVLDKKTFEEEVLKTKGYVLVDYFGDGCVPCEALMPDVE.

Cysteine 29 and cysteine 32 are disulfide-bonded.

It belongs to the thioredoxin family.

Functionally, participates in various redox reactions through the reversible oxidation of its active center dithiol to a disulfide and catalyzes dithiol-disulfide exchange reactions. This is Thioredoxin (trxA) from Clostridium sporogenes.